Here is a 409-residue protein sequence, read N- to C-terminus: MAQNFTKLNPQFENIIFEHDDNQMILNFGPQHPSSHGQLRLILELEGEKIIKATPEIGYLHRGCEKLGENMTYNEYMPTTDRLDYTSSTSNNYAYAYAVETLLNLEIPRRAQVIRTILLELNRMISHIFFISVHALDVGAMSVFLYAFKTREYGLDLMEDYCGARLTHNAIRIGGVPLDLPPNWLEGLKKFLGEMRECKKLIQGLLDKNRIWRMRLENVGVVTPKMAQSWGMSGIMLRGTGIAYDIRKEEPYELYKELDFDVPVGNYGDSYDRYCLYMLEIDESIRIIEQLIPMYAKTDTPIMAQNPHYISAPKEDIMTQNYALMQHFVLVAQGMRPPIGEVYAPTESPKGELGFFIHSEGEPYPHRLKIRAPSFYHIGALSDILVGQYLADAVTVIGSTNAVFGEVDR.

The protein belongs to the complex I 49 kDa subunit family. As to quaternary structure, NDH-1 is composed of 14 different subunits. Subunits NuoB, C, D, E, F, and G constitute the peripheral sector of the complex.

The protein localises to the cell inner membrane. The enzyme catalyses a quinone + NADH + 5 H(+)(in) = a quinol + NAD(+) + 4 H(+)(out). Its function is as follows. NDH-1 shuttles electrons from NADH, via FMN and iron-sulfur (Fe-S) centers, to quinones in the respiratory chain. The immediate electron acceptor for the enzyme in this species is believed to be ubiquinone. Couples the redox reaction to proton translocation (for every two electrons transferred, four hydrogen ions are translocated across the cytoplasmic membrane), and thus conserves the redox energy in a proton gradient. The chain is NADH-quinone oxidoreductase subunit D from Helicobacter pylori (strain G27).